The primary structure comprises 153 residues: MSNQLNTMDIKEILKYLPHRYPFLLIDRVLDFTVGEHLHAIKNVTINEPFFQGHFPIQPVMPGVLILEAMAQATGLLAFKTMSTEPSPEVLYYFAGIDKARFKRVVEPGDQIHFHVKMIKERRGIGVFVGEALVDGELVCSAEIMCARREIKK.

Residue H54 is part of the active site.

This sequence belongs to the thioester dehydratase family. FabZ subfamily.

Its subcellular location is the cytoplasm. The enzyme catalyses a (3R)-hydroxyacyl-[ACP] = a (2E)-enoyl-[ACP] + H2O. Its function is as follows. Involved in unsaturated fatty acids biosynthesis. Catalyzes the dehydration of short chain beta-hydroxyacyl-ACPs and long chain saturated and unsaturated beta-hydroxyacyl-ACPs. The sequence is that of 3-hydroxyacyl-[acyl-carrier-protein] dehydratase FabZ from Shewanella frigidimarina (strain NCIMB 400).